We begin with the raw amino-acid sequence, 87 residues long: Diazepam-binding inhibitor-like 5 (87 aa).

The ACB domain occupies 2–87; sequence SQVEFEMACA…VEELKKKEPC (86 aa). An acyl-CoA-binding positions include 29–33, K55, and Y74; that span reads YSFYK.

It belongs to the ACBP family. As to expression, exclusively expressed in late spermatids and spermatozoa. Not found in epididymis, spleen, bone marrow, skin, liver, brain, heart, kidney, muscle.

The protein localises to the cytoplasm. In terms of biological role, may be involved in the energy metabolism of the mature sperm. The protein is Diazepam-binding inhibitor-like 5 (Dbil5) of Mus musculus (Mouse).